The sequence spans 269 residues: Surfeit locus protein 4 (269 aa).

5 helical membrane-spanning segments follow: residues 64 to 84 (FLATCFVIINLIGQIGGCVLV), 92 to 112 (YACFGLFCIIALQTVAYSILW), 179 to 199 (FFSILQNMVGTALIILVAVGF), 203 to 223 (LAALTLVVWLLAINVYFNAFW), and 242 to 262 (TTSVIGGLLLVVALGPGGVSM). Positions 266–269 (KKEW) match the Di-lysine motif motif.

This sequence belongs to the SURF4 family.

It is found in the endoplasmic reticulum membrane. Its subcellular location is the endoplasmic reticulum-Golgi intermediate compartment membrane. It localises to the golgi apparatus membrane. Functionally, endoplasmic reticulum cargo receptor that mediates the export of lipoproteins by recruiting cargos into COPII vesicles to facilitate their secretion. This Danio rerio (Zebrafish) protein is Surfeit locus protein 4.